The primary structure comprises 558 residues: Phosphatidylserine lipase ABHD16A (558 aa).

2 helical membrane passes run isoleucine 60–phenylalanine 80 and valine 93–leucine 113. At arginine 114 to leucine 558 the chain is on the cytoplasmic side. In terms of domain architecture, AB hydrolase-1 spans leucine 281–histidine 406. Residues serine 355, aspartate 430, and histidine 507 each act as charge relay system in the active site.

It belongs to the AB hydrolase superfamily. ABHD16 family.

Its subcellular location is the membrane. The catalysed reaction is 1-heptadecanoyl-2-(5Z,8Z,11Z,14Z-eicosatetraenoyl)-sn-glycero-3-phosphoserine + H2O = 1-heptadecanoyl-sn-glycero-3-phosphoserine + (5Z,8Z,11Z,14Z)-eicosatetraenoate + H(+). The enzyme catalyses 1-hexadecanoyl-2-(9Z-octadecenoyl)-sn-glycero-3-phospho-L-serine + H2O = 1-hexadecanoyl-sn-glycero-3-phospho-L-serine + (9Z)-octadecenoate + H(+). It carries out the reaction 1-octadecanoyl-2-(9Z,12Z-octadecadienoyl)-sn-glycero-3-phosphoserine + H2O = 1-octadecanoyl-sn-glycero-3-phosphoserine + (9Z,12Z)-octadecadienoate + H(+). It catalyses the reaction 1-heptadecanoyl-2-(5Z,8Z,11Z,14Z-eicosatetraenoyl)-sn-glycero-3-phosphocholine + H2O = 1-heptadecanoyl-sn-glycero-3-phosphocholine + (5Z,8Z,11Z,14Z)-eicosatetraenoate + H(+). The catalysed reaction is 1-hexadecanoyl-2-(9Z-octadecenoyl)-sn-glycero-3-phosphoglycerol + H2O = 1-hexadecanoyl-sn-glycero-3-phosphoglycerol + (9Z)-octadecenoate + H(+). The enzyme catalyses 1-hexadecanoyl-2-(9Z-octadecenoyl)-sn-glycero-3-phospho-(1D-myo-inositol) + H2O = 1-hexadecanoyl-sn-glycero-3-phospho-(1D-myo-inositol) + (9Z)-octadecenoate + H(+). It carries out the reaction 1-heptadecanoyl-2-(5Z,8Z,11Z,14Z-eicosatetraenoyl)-sn-glycero-3-phosphoethanolamine + H2O = 1-heptadecanoyl-sn-glycero-3-phosphoethanolamine + (5Z,8Z,11Z,14Z)-eicosatetraenoate + H(+). It catalyses the reaction 1-hexadecanoyl-2-(9Z-octadecenoyl)-sn-glycero-3-phospho-(1'-sn-glycerol) + H2O = 1-hexadecanoyl-sn-glycero-3-phospho-(1'-sn-glycerol) + (9Z)-octadecenoate + H(+). The catalysed reaction is Hydrolyzes glycerol monoesters of long-chain fatty acids.. The enzyme catalyses 1-tetradecanoylglycerol + H2O = tetradecanoate + glycerol + H(+). It carries out the reaction 2-hexadecanoylglycerol + H2O = glycerol + hexadecanoate + H(+). It catalyses the reaction 1-(9Z-octadecenoyl)-glycerol + H2O = glycerol + (9Z)-octadecenoate + H(+). The catalysed reaction is 2-(9Z-octadecenoyl)-glycerol + H2O = glycerol + (9Z)-octadecenoate + H(+). The enzyme catalyses 2-(9Z,12Z-octadecadienoyl)-glycerol + H2O = (9Z,12Z)-octadecadienoate + glycerol + H(+). It carries out the reaction 1-(5Z,8Z,11Z,14Z-eicosatetraenoyl)-glycerol + H2O = glycerol + (5Z,8Z,11Z,14Z)-eicosatetraenoate + H(+). It catalyses the reaction 2-(5Z,8Z,11Z,14Z-eicosatetraenoyl)-glycerol + H2O = glycerol + (5Z,8Z,11Z,14Z)-eicosatetraenoate + H(+). The catalysed reaction is prostaglandin D2-1-glycerol ester + H2O = prostaglandin D2 + glycerol + H(+). The enzyme catalyses 2-glyceryl-15-deoxy-Delta(12,14)-prostaglandin J2 + H2O = 15-deoxy-Delta(12,14)-prostaglandin J2 + glycerol + H(+). It carries out the reaction 1-(9Z,12Z-octadecadienoyl)-glycerol + H2O = (9Z,12Z)-octadecadienoate + glycerol + H(+). Specifically inhibited by alpha-alkylidene-beta-lactone KC01 ((Z)-6-(2-Oxo-4-tridecyloxetan-3-ylidene)hexanamide). In terms of biological role, phosphatidylserine (PS) lipase that mediates the hydrolysis of phosphatidylserine to generate lysophosphatidylserine (LPS). LPS constitutes a class of signaling lipids that regulates immunological and neurological processes. Has no activity towards diacylglycerol, triacylglycerol or lysophosphatidylserine lipase. Also has monoacylglycerol lipase activity, with preference for 1-(9Z,12Z-octadecadienoyl)-glycerol (1-LG) and 2-glyceryl-15-deoxy-Delta(12,14)-prostaglandin J2 (15d-PGJ(2)-G). The sequence is that of Phosphatidylserine lipase ABHD16A from Mus musculus (Mouse).